Here is a 303-residue protein sequence, read N- to C-terminus: MRADLDAFLEHLRSERQVSAHTLDGYRRDLLKILALAEKAGLSDWNALDTRSLRTFVARLHQQGQSSRSLARLLSATRGLYQYLLREGRCRHDPANGLSAPKSPRKLPRTLDADRALQLLDGAVEDDFIARRDQALLELFYSSGLRLSELVGLDLEWLDLKEGLVRVRGKGNKVRELPVGKAARQALEAWLPLRAQAAPEDGAVFIGRGGKRLTPRAIQLRVRQAGVRELGQHLHPHMLRHSFASHLLESSGDLRAVQELLGHADIATTQIYTHLDFQHLASVYDRAHPRAKRKGNADGGNDP.

The Core-binding (CB) domain occupies 1–85 (MRADLDAFLE…ATRGLYQYLL (85 aa)). Residues 106–285 (KLPRTLDADR…DFQHLASVYD (180 aa)) enclose the Tyr recombinase domain. Active-site residues include Arg146, Lys170, His237, Arg240, and His263. Residue Tyr272 is the O-(3'-phospho-DNA)-tyrosine intermediate of the active site.

It belongs to the 'phage' integrase family. XerC subfamily. As to quaternary structure, forms a cyclic heterotetrameric complex composed of two molecules of XerC and two molecules of XerD.

The protein resides in the cytoplasm. In terms of biological role, site-specific tyrosine recombinase, which acts by catalyzing the cutting and rejoining of the recombining DNA molecules. The XerC-XerD complex is essential to convert dimers of the bacterial chromosome into monomers to permit their segregation at cell division. It also contributes to the segregational stability of plasmids. The protein is Tyrosine recombinase XerC of Pseudomonas aeruginosa (strain LESB58).